We begin with the raw amino-acid sequence, 472 residues long: Adenosylhomocysteinase (472 aa).

Threonine 61, aspartate 136, and glutamate 196 together coordinate substrate. 197–199 (TTT) provides a ligand contact to NAD(+). Substrate-binding residues include lysine 226 and aspartate 230. Residues asparagine 231, 260 to 265 (GYGDVG), glutamate 283, asparagine 318, 339 to 341 (IGH), and asparagine 384 each bind NAD(+).

Belongs to the adenosylhomocysteinase family. NAD(+) is required as a cofactor.

Its subcellular location is the cytoplasm. It catalyses the reaction S-adenosyl-L-homocysteine + H2O = L-homocysteine + adenosine. The protein operates within amino-acid biosynthesis; L-homocysteine biosynthesis; L-homocysteine from S-adenosyl-L-homocysteine: step 1/1. Its function is as follows. May play a key role in the regulation of the intracellular concentration of adenosylhomocysteine. The protein is Adenosylhomocysteinase of Cupriavidus necator (strain ATCC 17699 / DSM 428 / KCTC 22496 / NCIMB 10442 / H16 / Stanier 337) (Ralstonia eutropha).